The following is a 144-amino-acid chain: Phospholipase A2, membrane associated (144 aa).

The first 20 residues, 1 to 20 (MKTLLLLAVIMIFGLLQAHG), serve as a signal peptide directing secretion. 7 disulfides stabilise this stretch: Cys46–Cys137, Cys48–Cys64, Cys63–Cys117, Cys69–Cys144, Cys70–Cys110, Cys79–Cys103, and Cys97–Cys108. Ca(2+) is bound by residues His47, Gly49, and Gly51. His67 is an active-site residue. Ca(2+) is bound at residue Asp68. Asp111 is a catalytic residue.

Belongs to the phospholipase A2 family. Ca(2+) is required as a cofactor. Expressed in various tissues including heart, kidney, liver, lung, pancreas, placenta, skeletal muscle, prostate, ovary, colon and small intestine. Not detected in lymphoid organs and brain. Expressed in platelets (at protein level).

The protein resides in the secreted. It is found in the cell membrane. Its subcellular location is the mitochondrion outer membrane. The catalysed reaction is a 1,2-diacyl-sn-glycero-3-phosphoethanolamine + H2O = a 1-acyl-sn-glycero-3-phosphoethanolamine + a fatty acid + H(+). It carries out the reaction 1-hexadecanoyl-2-(9Z-octadecenoyl)-sn-glycero-3-phosphoethanolamine + H2O = 1-hexadecanoyl-sn-glycero-3-phosphoethanolamine + (9Z)-octadecenoate + H(+). The enzyme catalyses 1-hexadecanoyl-2-(9Z,12Z-octadecadienoyl)-sn-glycero-3-phosphoethanolamine + H2O = 1-hexadecanoyl-sn-glycero-3-phosphoethanolamine + (9Z,12Z)-octadecadienoate + H(+). It catalyses the reaction 1-hexadecanoyl-2-(5Z,8Z,11Z,14Z-eicosatetraenoyl)-sn-glycero-3-phosphoethanolamine + H2O = 1-hexadecanoyl-sn-glycero-3-phosphoethanolamine + (5Z,8Z,11Z,14Z)-eicosatetraenoate + H(+). The catalysed reaction is N-hexadecanoyl-1,2-di-(9Z-octadecenoyl)-sn-glycero-3-phosphoethanolamine + H2O = N-hexadecanoyl-1-(9Z-octadecenoyl)-sn-glycero-3-phosphoethanolamine + (9Z)-octadecenoate + H(+). It carries out the reaction 1,2-dihexadecanoyl-sn-glycero-3-phospho-(1'-sn-glycerol) + H2O = 1-hexadecanoyl-sn-glycero-3-phospho-(1'-sn-glycerol) + hexadecanoate + H(+). The enzyme catalyses 1-hexadecanoyl-2-(9Z-octadecenoyl)-sn-glycero-3-phosphoglycerol + H2O = 1-hexadecanoyl-sn-glycero-3-phosphoglycerol + (9Z)-octadecenoate + H(+). It catalyses the reaction 1-hexadecanoyl-2-(9Z-octadecenoyl)-sn-glycero-3-phospho-(1'-sn-glycerol) + H2O = 1-hexadecanoyl-sn-glycero-3-phospho-(1'-sn-glycerol) + (9Z)-octadecenoate + H(+). The catalysed reaction is a 1,2-diacyl-sn-glycero-3-phosphocholine + H2O = a 1-acyl-sn-glycero-3-phosphocholine + a fatty acid + H(+). It carries out the reaction 1,2-dihexadecanoyl-sn-glycero-3-phosphocholine + H2O = 1-hexadecanoyl-sn-glycero-3-phosphocholine + hexadecanoate + H(+). The enzyme catalyses 1-hexadecanoyl-2-(9Z-octadecenoyl)-sn-glycero-3-phosphocholine + H2O = 1-hexadecanoyl-sn-glycero-3-phosphocholine + (9Z)-octadecenoate + H(+). It catalyses the reaction 1-hexadecanoyl-2-(9Z,12Z-octadecadienoyl)-sn-glycero-3-phosphocholine + H2O = (9Z,12Z)-octadecadienoate + 1-hexadecanoyl-sn-glycero-3-phosphocholine + H(+). The catalysed reaction is 1-hexadecanoyl-2-(4Z,7Z,10Z,13Z,16Z,19Z-docosahexaenoyl)-sn-glycero-3-phosphocholine + H2O = (4Z,7Z,10Z,13Z,16Z,19Z)-docosahexaenoate + 1-hexadecanoyl-sn-glycero-3-phosphocholine + H(+). Its function is as follows. Secretory calcium-dependent phospholipase A2 that primarily targets extracellular phospholipids with implications in host antimicrobial defense, inflammatory response and tissue regeneration. Hydrolyzes the ester bond of the fatty acyl group attached at sn-2 position of phospholipids (phospholipase A2 activity) with preference for phosphatidylethanolamines and phosphatidylglycerols over phosphatidylcholines. Contributes to lipid remodeling of cellular membranes and generation of lipid mediators involved in pathogen clearance. Displays bactericidal activity against Gram-positive bacteria by directly hydrolyzing phospholipids of the bacterial membrane. Upon sterile inflammation, targets membrane phospholipids of extracellular mitochondria released from activated platelets, generating free unsaturated fatty acids such as arachidonate that is used by neighboring leukocytes to synthesize inflammatory eicosanoids such as leukotrienes. Simultaneously, by compromising mitochondrial membrane integrity, promotes the release in circulation of potent damage-associated molecular pattern molecules that activate the innate immune response. Plays a stem cell regulator role in the intestinal crypt. Within intracellular compartment mediates Paneth cell differentiation and its stem cell supporting functions by inhibiting Wnt signaling pathway in intestinal stem cell (ICS). Secreted in the intestinal lumen upon inflammation, acts in an autocrine way and promotes prostaglandin E2 synthesis that stimulates Wnt signaling pathway in ICS cells and tissue regeneration. May play a role in the biosynthesis of N-acyl ethanolamines that regulate energy metabolism and inflammation. Hydrolyzes N-acyl phosphatidylethanolamines to N-acyl lysophosphatidylethanolamines, which are further cleaved by a lysophospholipase D to release N-acyl ethanolamines. Independent of its catalytic activity, acts as a ligand for integrins. Binds to and activates integrins ITGAV:ITGB3, ITGA4:ITGB1 and ITGA5:ITGB1. Binds to a site (site 2) which is distinct from the classical ligand-binding site (site 1) and induces integrin conformational changes and enhanced ligand binding to site 1. Induces cell proliferation in an integrin-dependent manner. The polypeptide is Phospholipase A2, membrane associated (PLA2G2A) (Homo sapiens (Human)).